A 123-amino-acid chain; its full sequence is MSNSNNDSRRRGLEMERRAADWLASHGLRLVDANQHARRGEIDLIMRDGDTLVFIEVRHRRDARHGHPFETVTAAKQRRLIGAARFYLHRNGLSCACRFDVVGVTGTPPHLSFEWIRSAFDAF.

This sequence belongs to the UPF0102 family.

The chain is UPF0102 protein Csal_2201 from Chromohalobacter salexigens (strain ATCC BAA-138 / DSM 3043 / CIP 106854 / NCIMB 13768 / 1H11).